A 379-amino-acid polypeptide reads, in one-letter code: Spermatogenesis-associated protein 17 (379 aa).

3 IQ domains span residues 48–77 (ENDA…VVTI), 71–100 (LNRV…AAYY), and 107–136 (YNEM…LKEY).

In terms of tissue distribution, strongly expressed in adult testis but weakly expressed in the spleen and thymus. Strongly expressed in round and elongating spermatids, and weakly or not expressed in spermatozoa.

Its subcellular location is the cytoplasm. In Mus musculus (Mouse), this protein is Spermatogenesis-associated protein 17 (Spata17).